The following is a 160-amino-acid chain: MSSKEKEQEAEKGKQGWIIPTVIPPEEWSTFRYRGKTLEELLNMPMDEFIKLLPARQRRSLKRGLKPEHRKLLEKIRKAKKLMAQGKKVVIKTHCRDMIILPEMVGLTIHVYNGITYIPVFISPWHIGHYLGEFAITTKIVQHGEPGLKATRSSLHIAAK.

The protein belongs to the universal ribosomal protein uS19 family.

Its function is as follows. Protein S19 forms a complex with S13 that binds strongly to the 16S ribosomal RNA. The polypeptide is Small ribosomal subunit protein uS19 (Pyrobaculum islandicum (strain DSM 4184 / JCM 9189 / GEO3)).